The sequence spans 1404 residues: MKDLLKIFKSQIKTDEFDAIKIALASPDMIRSWSFGEVKKPETINYRTFKPERDGLFCARIFGPVKDYECLCGKYKRLKHRGVICEKCGVEVTQSKVRRERMGHIELATPIAHIWFLKSLPSRIGLLLDMPLRDIERVLYFESYVIVNEGLTNLEKNQILSEEQYLNALEKFGDEFDAKMGAEAIKLLLNSINLKQECNKLRDELNNSNSETKRKKLTKRIKLLESFIHSNNKPEWMILTVLPILPPDLRPLVPLDGGRFATSDLNDLYRRVINRNNRLKRLLELSAPDIIVRNEKRMLQEAIDALLDNGRRGRAITGSNKRPLKSLADMIKGKQGRFRQNLLGKRVDYSGRSVITVGPYLRLHQCGLPKKMALELFKPFIYGKLEKKGLATTIKAAKKMVEREESIVWDILDEVIHEHPVLLNRAPTLHRLGIQAFEPILIEGKAIQLHPLVCAAYNADFDGDQMAVHVPLTKEAQYEARSLMMSTNNILSPANGEPIIVPSQDVVLGLYYMTRKKINAKGEGMIFKNSKEAEKSYQMGFSELHAEVQVRITEYKKIDKQNFLKNTKIENTTIGRAILWMIVPKGLPFFMVNKILGKKSISKLLNTCYRILGLKSTVNFADQIMYTGFNYAARSGSSVGIDDMEIPKKKSDIISEAEIEVSEIQEQFQSGLVTAGERYNKVIDIWAAANERVSKAMMKNLSTESTTNKQGNEEKQISFNSIFMMADSGARGSAAQIRQLAGMRGLMAKPDGSIIETPITANFREGLNVLQYFISTHGARKGLADTALKTANSGYLTRRLVDVAQDLVVTEDDCNTHKGIIMTSVIEGGDVKESLREKALGRVTAENIIKPYSSDILITRNTLLNEKWCNVLEKYSIDSIKVRSVVHCDTNFGVCANCYGRDLARGNLVNKGEAIGVIAAQSIGEPGTQLTMRTFHIGGAASRAASESSIQVKNSGIIKLHNAKSVINSEGKIVITSRNVELKILDKFRRTKESYKVPYGAIIAKMDEELVNSGEIVAKWDPHTIPVISEVNGYIEFVDMIDGQSITRQTDELTGLTSIVILDTSERTSLGKDLRPALKIVDSNGENVLISGTDMPAQYFLPGKSIVQVDNSIKISSGDTLARIPQESGGTKDITGGLPRVADLFEARRPKELAILAEISGFISFGKDTKGKRRLIITPYNNNTPYEEMIPKWRQLNVFEGERVEKGDVISDGPESPHDILRLRGVQAVTKYIINEVQEVYRLQGVKINDKHIEVIIRQMLRKATIIKSEHSEFLDGEQVEYSRIKVSNRNLSKIGKKTAIFSRDLLGITKASLATESFISAASFQETTRVLTESSVAGKKDELRGLKENVIVGRLIPAGTGYAYHKKRLKNCQKDKTKEKNKPSSISVEEASANLSELLNSTL.

Zn(2+) is bound by residues cysteine 70, cysteine 72, cysteine 85, and cysteine 88. Residues aspartate 460, aspartate 462, and aspartate 464 each coordinate Mg(2+). Positions 814, 888, 895, and 898 each coordinate Zn(2+).

It belongs to the RNA polymerase beta' chain family. In terms of assembly, the RNAP catalytic core consists of 2 alpha, 1 beta, 1 beta' and 1 omega subunit. When a sigma factor is associated with the core the holoenzyme is formed, which can initiate transcription. Mg(2+) serves as cofactor. Zn(2+) is required as a cofactor.

The enzyme catalyses RNA(n) + a ribonucleoside 5'-triphosphate = RNA(n+1) + diphosphate. DNA-dependent RNA polymerase catalyzes the transcription of DNA into RNA using the four ribonucleoside triphosphates as substrates. The protein is DNA-directed RNA polymerase subunit beta' of Buchnera aphidicola subsp. Baizongia pistaciae (strain Bp).